The sequence spans 68 residues: Protein SlyX homolog (68 aa).

This sequence belongs to the SlyX family.

This Pseudomonas entomophila (strain L48) protein is Protein SlyX homolog.